The sequence spans 146 residues: 3-dehydroquinate dehydratase (146 aa).

The Proton acceptor role is filled by Tyr-22. Residues Asn-74, His-80, and Asp-87 each contribute to the substrate site. His-100 functions as the Proton donor in the catalytic mechanism. Substrate is bound by residues 101–102 (LS) and Arg-111.

This sequence belongs to the type-II 3-dehydroquinase family. In terms of assembly, homododecamer.

The enzyme catalyses 3-dehydroquinate = 3-dehydroshikimate + H2O. Its pathway is metabolic intermediate biosynthesis; chorismate biosynthesis; chorismate from D-erythrose 4-phosphate and phosphoenolpyruvate: step 3/7. Catalyzes a trans-dehydration via an enolate intermediate. The sequence is that of 3-dehydroquinate dehydratase from Clostridium beijerinckii (strain ATCC 51743 / NCIMB 8052) (Clostridium acetobutylicum).